We begin with the raw amino-acid sequence, 248 residues long: Ureidoacrylate amidohydrolase RutB (248 aa).

Asp41 (proton acceptor) is an active-site residue. Lys150 is an active-site residue. Catalysis depends on Cys183, which acts as the Nucleophile.

This sequence belongs to the isochorismatase family. RutB subfamily.

It catalyses the reaction (Z)-3-ureidoacrylate + H2O + H(+) = (Z)-3-aminoacrylate + NH4(+) + CO2. The catalysed reaction is (Z)-3-ureidoacrylate + H2O = (Z)-3-aminoacrylate + carbamate + H(+). The enzyme catalyses (Z)-2-methylureidoacrylate + H2O + H(+) = (Z)-2-methylaminoacrylate + NH4(+) + CO2. In terms of biological role, hydrolyzes ureidoacrylate to form aminoacrylate and carbamate. The carbamate hydrolyzes spontaneously, thereby releasing one of the nitrogen atoms of the pyrimidine ring as ammonia and one of its carbon atoms as CO2. The polypeptide is Ureidoacrylate amidohydrolase RutB (Methylorubrum extorquens (strain DSM 6343 / CIP 106787 / DM4) (Methylobacterium extorquens)).